Consider the following 801-residue polypeptide: Protocadherin beta-8 (801 aa).

The first 29 residues, 1-29, serve as a signal peptide directing secretion; the sequence is MEASGKLICRQRQVLFSFLLLGLSLAGAA. The Extracellular portion of the chain corresponds to 30–691; that stretch reads EPRSYSVVEE…GQADSLTVYL (662 aa). Cadherin domains lie at 36 to 134, 139 to 243, 248 to 348, 353 to 452, and 457 to 562; these read VVEE…SPVF, MLVK…APEF, YRVQ…APEV, FTSP…APAF, and YTLF…SPFV. A disulfide bond links cysteine 97 and cysteine 103. N-linked (GlcNAc...) asparagine glycans are attached at residues asparagine 419 and asparagine 437. The N-linked (GlcNAc...) asparagine glycan is linked to asparagine 568. The Cadherin 6 domain occupies 569-672; the sequence is SSAPCTELVP…LVDGFSQPYL (104 aa). Residues 692 to 710 form a helical membrane-spanning segment; the sequence is VVALASVSSLFLFSVLLFV. The Cytoplasmic portion of the chain corresponds to 711–801; sequence AVRLCRRSRA…NGFGFSLQLK (91 aa).

In terms of assembly, forms homodimers in trans (molecules expressed by two different cells). Forms promiscuous heterodimers in cis (at the plasma membrane of the same cell) with other protocadherins.

Its subcellular location is the cell membrane. Its function is as follows. Calcium-dependent cell-adhesion protein involved in cells self-recognition and non-self discrimination. Thereby, it is involved in the establishment and maintenance of specific neuronal connections in the brain. In Pan troglodytes (Chimpanzee), this protein is Protocadherin beta-8.